Here is a 470-residue protein sequence, read N- to C-terminus: Glutamate--tRNA ligase (470 aa).

Residues 9–19 (PSPTGFLHVGG) carry the 'HIGH' region motif. Positions 236–240 (RLSKR) match the 'KMSKS' region motif. Lysine 239 lines the ATP pocket.

Belongs to the class-I aminoacyl-tRNA synthetase family. Glutamate--tRNA ligase type 1 subfamily. In terms of assembly, monomer.

Its subcellular location is the cytoplasm. The enzyme catalyses tRNA(Glu) + L-glutamate + ATP = L-glutamyl-tRNA(Glu) + AMP + diphosphate. Functionally, catalyzes the attachment of glutamate to tRNA(Glu) in a two-step reaction: glutamate is first activated by ATP to form Glu-AMP and then transferred to the acceptor end of tRNA(Glu). The chain is Glutamate--tRNA ligase from Legionella pneumophila subsp. pneumophila (strain Philadelphia 1 / ATCC 33152 / DSM 7513).